Consider the following 387-residue polypeptide: [LysW]-aminoadipate semialdehyde/glutamate semialdehyde transaminase (387 aa).

Pyridoxal 5'-phosphate is bound by residues 96–97 (GT) and Phe123. Substrate is bound at residue Arg126. 207 to 210 (DEVQ) contributes to the pyridoxal 5'-phosphate binding site. Lys236 bears the N6-(pyridoxal phosphate)lysine mark. Ser264 is a binding site for substrate. Pyridoxal 5'-phosphate is bound at residue Thr265.

Belongs to the class-III pyridoxal-phosphate-dependent aminotransferase family. LysJ subfamily. In terms of assembly, homodimer. Pyridoxal 5'-phosphate serves as cofactor.

The protein localises to the cytoplasm. It catalyses the reaction [amino-group carrier protein]-C-terminal-gamma-(L-lysyl)-L-glutamate + 2-oxoglutarate = [amino-group carrier protein]-C-terminal-N-(1-carboxy-5-oxopentan-1-yl)-L-glutamine + L-glutamate. The enzyme catalyses [amino-group carrier protein]-C-terminal-gamma-(L-ornithyl)-L-glutamate + 2-oxoglutarate = [amino-group carrier protein]-C-terminal-gamma-(L-glutamyl-5-semialdehyde)-L-glutamate + L-glutamate. Its pathway is amino-acid biosynthesis; L-lysine biosynthesis via AAA pathway; L-lysine from L-alpha-aminoadipate (Thermus route): step 4/5. The protein operates within amino-acid biosynthesis; L-arginine biosynthesis. Its function is as follows. Involved in both the arginine and lysine biosynthetic pathways. The sequence is that of [LysW]-aminoadipate semialdehyde/glutamate semialdehyde transaminase from Sulfurisphaera tokodaii (strain DSM 16993 / JCM 10545 / NBRC 100140 / 7) (Sulfolobus tokodaii).